We begin with the raw amino-acid sequence, 141 residues long: MEWLSGFLDQIIAFFQWIWDFFAQGIYDFVRDGLVVATKASMYAALQTLILLIDVSYTAARELIDSLGVPQMIRSMYAALPGPIAAGLAFFGVPQALNIIMGRGGDALLHALRAVHWEVIRVDQDPSRPQWLLQNLRRDPG.

3 helical membrane passes run W3–A23, G33–I53, and L80–I100.

The protein belongs to the inovirus G6P protein family. Interacts with G3P; this interaction is required for proper integration of G3P and G6P into the virion.

It is found in the virion. The protein resides in the host membrane. Its function is as follows. Plays essential roles both in the entry of the viral genome into the bacterial host and in budding process. The formation of the G3P-G6P complex termed adsorption complex is essential for correct termination of filamentous phage assembly. The polypeptide is Head virion protein G6P (VI) (Pseudomonas phage Pf1 (Bacteriophage Pf1)).